The following is an 876-amino-acid chain: ATP-dependent helicase Lhr-Core (876 aa).

Residues glutamine 37, lysine 60, threonine 61, aspartate 175, glutamate 176, arginine 374, and histidine 377 each coordinate ATP. A Helicase ATP-binding domain is found at isoleucine 41–glutamate 232. Residues aspartate 175–histidine 178 carry the DEAH box motif. A Helicase C-terminal domain is found at proline 249–aspartate 421. A WH domain region spans residues valine 422 to proline 506. Positions aspartate 507–lysine 876 are domain 4.

This sequence belongs to the Lhr helicase family. Lhr-Core subfamily. As to quaternary structure, monomer.

It carries out the reaction Couples ATP hydrolysis with the unwinding of duplex DNA by translocating in the 3'-5' direction.. It catalyses the reaction ATP + H2O = ADP + phosphate + H(+). Its function is as follows. Probably part of a 4-gene DNA damage response locus in which the upstream ups system, in combination with this downstream locus, functions in homologous recombination to rescue Sulfolobales from DNA-damaging threats. DNA helicase that translocates in a 3'-5' direction on single-stranded (ss)DNA. Binds Holliday junction (HJ) DNA, Y-shaped DNA, DNA with a 3'-overhang and single-stranded (ss)DNA with high affinity; binds double-stranded (ds)DNA with less affinity. Has helicase activity on DNA with a 3'-overhang, Y-shaped DNA and HJ DNA. Does not unwind blunt-ended dsDNA or DNA with a 5'-overhang. In Sulfolobus acidocaldarius (strain ATCC 33909 / DSM 639 / JCM 8929 / NBRC 15157 / NCIMB 11770), this protein is ATP-dependent helicase Lhr-Core.